Consider the following 509-residue polypeptide: BPI fold-containing family C protein (509 aa).

An N-terminal signal peptide occupies residues 1–23 (MRTKQVPVLWACFLLWSLYIASS). N-linked (GlcNAc...) asparagine glycosylation is found at N63, N79, N92, N113, and N117. A disulfide bridge links C161 with C202. 5 N-linked (GlcNAc...) asparagine glycosylation sites follow: N215, N227, N357, N374, and N457.

It belongs to the BPI/LBP/Plunc superfamily. BPI/LBP family.

Its subcellular location is the secreted. This is BPI fold-containing family C protein (Bpifc) from Mus musculus (Mouse).